Reading from the N-terminus, the 368-residue chain is Phosphate acyltransferase (368 aa).

Positions 338-368 are disordered; the sequence is GDGGHDAGGAGTASPAPGHHAEPSAAQSSKA.

Belongs to the PlsX family. As to quaternary structure, homodimer. Probably interacts with PlsY.

Its subcellular location is the cytoplasm. The catalysed reaction is a fatty acyl-[ACP] + phosphate = an acyl phosphate + holo-[ACP]. It functions in the pathway lipid metabolism; phospholipid metabolism. Its function is as follows. Catalyzes the reversible formation of acyl-phosphate (acyl-PO(4)) from acyl-[acyl-carrier-protein] (acyl-ACP). This enzyme utilizes acyl-ACP as fatty acyl donor, but not acyl-CoA. In Burkholderia ambifaria (strain MC40-6), this protein is Phosphate acyltransferase.